The chain runs to 418 residues: Serine hydroxymethyltransferase (418 aa).

(6S)-5,6,7,8-tetrahydrofolate is bound by residues leucine 121 and 125-127; that span reads GHL. Lysine 230 is subject to N6-(pyridoxal phosphate)lysine. 355–357 lines the (6S)-5,6,7,8-tetrahydrofolate pocket; that stretch reads SPF.

This sequence belongs to the SHMT family. As to quaternary structure, homodimer. Pyridoxal 5'-phosphate is required as a cofactor.

It localises to the cytoplasm. It carries out the reaction (6R)-5,10-methylene-5,6,7,8-tetrahydrofolate + glycine + H2O = (6S)-5,6,7,8-tetrahydrofolate + L-serine. It functions in the pathway one-carbon metabolism; tetrahydrofolate interconversion. Its pathway is amino-acid biosynthesis; glycine biosynthesis; glycine from L-serine: step 1/1. Catalyzes the reversible interconversion of serine and glycine with tetrahydrofolate (THF) serving as the one-carbon carrier. This reaction serves as the major source of one-carbon groups required for the biosynthesis of purines, thymidylate, methionine, and other important biomolecules. Also exhibits THF-independent aldolase activity toward beta-hydroxyamino acids, producing glycine and aldehydes, via a retro-aldol mechanism. The polypeptide is Serine hydroxymethyltransferase (Streptococcus agalactiae serotype V (strain ATCC BAA-611 / 2603 V/R)).